Here is a 342-residue protein sequence, read N- to C-terminus: L-threonine 3-dehydrogenase (342 aa).

A Zn(2+)-binding site is contributed by Cys38. Catalysis depends on charge relay system residues Thr40 and His43. Zn(2+) is bound by residues His63, Glu64, Cys93, Cys96, Cys99, and Cys107. Residues Ile175, Asp195, Arg200, 262 to 264 (LGI), and 286 to 287 (IY) contribute to the NAD(+) site.

It belongs to the zinc-containing alcohol dehydrogenase family. Homotetramer. The cofactor is Zn(2+).

It localises to the cytoplasm. The catalysed reaction is L-threonine + NAD(+) = (2S)-2-amino-3-oxobutanoate + NADH + H(+). Its pathway is amino-acid degradation; L-threonine degradation via oxydo-reductase pathway; glycine from L-threonine: step 1/2. Catalyzes the NAD(+)-dependent oxidation of L-threonine to 2-amino-3-ketobutyrate. This is L-threonine 3-dehydrogenase from Burkholderia cenocepacia (strain HI2424).